Consider the following 154-residue polypeptide: 3-hydroxyacyl-[acyl-carrier-protein] dehydratase FabZ (154 aa).

His-55 is a catalytic residue.

It belongs to the thioester dehydratase family. FabZ subfamily.

It is found in the cytoplasm. The enzyme catalyses a (3R)-hydroxyacyl-[ACP] = a (2E)-enoyl-[ACP] + H2O. Functionally, involved in unsaturated fatty acids biosynthesis. Catalyzes the dehydration of short chain beta-hydroxyacyl-ACPs and long chain saturated and unsaturated beta-hydroxyacyl-ACPs. The polypeptide is 3-hydroxyacyl-[acyl-carrier-protein] dehydratase FabZ (Oleidesulfovibrio alaskensis (strain ATCC BAA-1058 / DSM 17464 / G20) (Desulfovibrio alaskensis)).